The following is a 536-amino-acid chain: Probable cytochrome P450 318a1 (536 aa).

The span at 439–457 shows a compositional bias: basic and acidic residues; sequence EEEQLSKGHNDSGSGEKRR. Residues 439 to 460 form a disordered region; sequence EEEQLSKGHNDSGSGEKRRQRD. Residue C477 coordinates heme.

The protein belongs to the cytochrome P450 family. Heme serves as cofactor.

It localises to the endoplasmic reticulum membrane. The protein localises to the microsome membrane. In terms of biological role, may be involved in the metabolism of insect hormones and in the breakdown of synthetic insecticides. The chain is Probable cytochrome P450 318a1 (Cyp318a1) from Drosophila melanogaster (Fruit fly).